Here is a 454-residue protein sequence, read N- to C-terminus: Serine--tRNA ligase (454 aa).

An L-serine-binding site is contributed by 247 to 249; the sequence is TAE. Residues 278-280 and V294 each bind ATP; that span reads RKE. An L-serine-binding site is contributed by E301. 365–368 is an ATP binding site; sequence ELAS. T400 serves as a coordination point for L-serine.

The protein belongs to the class-II aminoacyl-tRNA synthetase family. Type-1 seryl-tRNA synthetase subfamily. Homodimer. The tRNA molecule binds across the dimer.

It is found in the cytoplasm. It catalyses the reaction tRNA(Ser) + L-serine + ATP = L-seryl-tRNA(Ser) + AMP + diphosphate + H(+). The catalysed reaction is tRNA(Sec) + L-serine + ATP = L-seryl-tRNA(Sec) + AMP + diphosphate + H(+). The protein operates within aminoacyl-tRNA biosynthesis; selenocysteinyl-tRNA(Sec) biosynthesis; L-seryl-tRNA(Sec) from L-serine and tRNA(Sec): step 1/1. Functionally, catalyzes the attachment of serine to tRNA(Ser). Is also able to aminoacylate tRNA(Sec) with serine, to form the misacylated tRNA L-seryl-tRNA(Sec), which will be further converted into selenocysteinyl-tRNA(Sec). The sequence is that of Serine--tRNA ligase from Pyrobaculum calidifontis (strain DSM 21063 / JCM 11548 / VA1).